We begin with the raw amino-acid sequence, 183 residues long: 2-C-methyl-D-erythritol 2,4-cyclodiphosphate synthase (183 aa).

2 residues coordinate a divalent metal cation: Asp8 and His10. 4-CDP-2-C-methyl-D-erythritol 2-phosphate-binding positions include 8 to 10 (DVH) and 34 to 35 (HS). His42 lines the a divalent metal cation pocket. 4-CDP-2-C-methyl-D-erythritol 2-phosphate contacts are provided by residues 56 to 58 (DIG), 61 to 65 (FPDTD), 132 to 135 (TTEE), and Phe139.

This sequence belongs to the IspF family. As to quaternary structure, homotrimer. Requires a divalent metal cation as cofactor.

The catalysed reaction is 4-CDP-2-C-methyl-D-erythritol 2-phosphate = 2-C-methyl-D-erythritol 2,4-cyclic diphosphate + CMP. It functions in the pathway isoprenoid biosynthesis; isopentenyl diphosphate biosynthesis via DXP pathway; isopentenyl diphosphate from 1-deoxy-D-xylulose 5-phosphate: step 4/6. Its function is as follows. Involved in the biosynthesis of isopentenyl diphosphate (IPP) and dimethylallyl diphosphate (DMAPP), two major building blocks of isoprenoid compounds. Catalyzes the conversion of 4-diphosphocytidyl-2-C-methyl-D-erythritol 2-phosphate (CDP-ME2P) to 2-C-methyl-D-erythritol 2,4-cyclodiphosphate (ME-CPP) with a corresponding release of cytidine 5-monophosphate (CMP). This is 2-C-methyl-D-erythritol 2,4-cyclodiphosphate synthase from Lachnospira eligens (strain ATCC 27750 / DSM 3376 / VPI C15-48 / C15-B4) (Eubacterium eligens).